The chain runs to 649 residues: Stress-70 protein, mitochondrial (649 aa).

The N-terminal 46 residues, M1–Y46, are a transit peptide targeting the mitochondrion. An interaction with NFS1 region spans residues M1 to V432. Positions 63 and 64 each coordinate ADP. Residues T63–D431 are nucleotide-binding domain (NBD). Position 76 is an N6-acetyllysine (K76). T87 is subject to Phosphothreonine. 2 positions are modified to N6-acetyllysine; alternate: K135 and K138. N6-succinyllysine; alternate occurs at positions 135 and 138. K143 bears the N6-acetyllysine mark. K206 carries the post-translational modification N6-acetyllysine; alternate. At K206 the chain carries N6-succinyllysine; alternate. At K206 the chain carries N6-malonyllysine; alternate. 2 positions are modified to N6-acetyllysine: K234 and K288. An N6-acetyllysine; alternate modification is found at K300. K300 carries the N6-succinyllysine; alternate modification. 3 residues coordinate ADP: E313, K316, and S320. Position 368 is an N6-succinyllysine (K368). ADP contacts are provided by G388 and R391. K394 carries the post-translational modification N6-succinyllysine. At S408 the chain carries Phosphoserine. The segment at V432–T441 is interdomain linker. K565, K598, and K638 each carry N6-acetyllysine; alternate. Residues K565, K598, and K638 each carry the N6-succinyllysine; alternate modification.

Belongs to the heat shock protein 70 family. As to quaternary structure, interacts strongly with the intermediate form of FXN and weakly with its mature form. Interacts with HSCB. Associates with the mitochondrial contact site and cristae organizing system (MICOS) complex, composed of at least MICOS10/MIC10, CHCHD3/MIC19, CHCHD6/MIC25, APOOL/MIC27, IMMT/MIC60, APOO/MIC23/MIC26 and QIL1/MIC13. This complex was also known under the names MINOS or MitOS complex. The MICOS complex associates with mitochondrial outer membrane proteins SAMM50, MTX1, MTX2 and DNAJC11, mitochondrial inner membrane protein TMEM11 and with HSPA9. Interacts with DNLZ, the interaction is required to prevent self-aggregation. Interacts with TESPA1. Interacts with PDPN. Interacts with NFU1, NFS1 and ISCU. Interacts with TP53; the interaction promotes TP53 degradation. Interacts (via SBD domain) with UBXN2A; the interaction with UBXN2A inhibits HSPA9/MOT-2 interaction with and degradation of TP53, thereby promotes TP53 translocation to the nucleus. Interacts with ITPR1 AND VDAC1; this interaction couples ITPR1 to VDAC1. Component of the TIM23 mitochondrial inner membrane pre-sequence translocase complex.

Its subcellular location is the mitochondrion. It localises to the nucleus. The protein localises to the nucleolus. The protein resides in the cytoplasm. It is found in the mitochondrion matrix. It catalyses the reaction ATP + H2O = ADP + phosphate + H(+). With respect to regulation, the chaperone activity is regulated by ATP-induced allosteric coupling of the nucleotide-binding (NBD) and substrate-binding (SBD) domains. ATP binding in the NBD leads to a conformational change in the NBD, which is transferred through the interdomain linker (IDL) to the substrate-binding domain (SBD). This elicits a reduced substrate affinity and a faster substrate exchange rate. Upon hydrolysis of ATP to ADP, the protein undergoes a conformational change that increases its affinity for substrate proteins. It cycles through repeated phases of ATP hydrolysis and nucleotide exchange, facilitating repeated cycles of substrate binding and release. Functions in collaboration with co-chaperones. Functions with the co-chaperone, DNLZ, to maintain solubility and regulate ATP hydrolysis. Nucleotide exchange factors, GRPEL1 and GRPEL2, accelerate nucleotide exchange. Mitochondrial chaperone that plays a key role in mitochondrial protein import, folding, and assembly. Plays an essential role in the protein quality control system, the correct folding of proteins, the re-folding of misfolded proteins, and the targeting of proteins for subsequent degradation. These processes are achieved through cycles of ATP binding, ATP hydrolysis, and ADP release, mediated by co-chaperones. In mitochondria, it associates with the TIM (translocase of the inner membrane) protein complex to assist in the import and folding of mitochondrial proteins. Plays an important role in mitochondrial iron-sulfur cluster (ISC) biogenesis, interacts with and stabilizes ISC cluster assembly proteins FXN, NFU1, NFS1 and ISCU. Regulates erythropoiesis via stabilization of ISC assembly. Regulates mitochondrial calcium-dependent apoptosis by coupling two calcium channels, ITPR1 and VDAC1, at the mitochondria-associated endoplasmic reticulum (ER) membrane to facilitate calcium transport from the ER lumen to the mitochondria intermembrane space, providing calcium for the downstream calcium channel MCU, which releases it into the mitochondrial matrix. Although primarily located in the mitochondria, it is also found in other cellular compartments. In the cytosol, it associates with proteins involved in signaling, apoptosis, or senescence. It may play a role in cell cycle regulation via its interaction with and promotion of degradation of TP53. May play a role in the control of cell proliferation and cellular aging. Protects against reactive oxygen species (ROS). Extracellular HSPA9 plays a cytoprotective role by preventing cell lysis following immune attack by the membrane attack complex by disrupting formation of the complex. In Canis lupus familiaris (Dog), this protein is Stress-70 protein, mitochondrial.